A 401-amino-acid chain; its full sequence is MKKDYYEVLGVSRSASKDEIKKAYRKLALQYHPDKNPDNKDAEEHFKEVNEAYEVLSNDDKRRRYDQFGHAGVGSSAASGAGGAYAGGATDFNDIFSAFNDMFGGGRARGGGAPFGFEEVFGGGGGAGRRGRTSAGISGTDLKIRLKLTLEEIAKGVEKTLKIKKQIVCKECNGSGSKTGATEPCQTCHGSGEVRQASKTMFGQFVNITACPTCGGEGRVVKDRCTACYGEGIKQGDVTVKVTVPAGVQDGNYLTLRGQGNAGPRGGAPGDLIVVIEEKPHELFRRDGNDVIFNLALSYPDLVLGTKIDVPTLDGAVKLTIPPATQPESMLRIPGQGIGHLRGSGKGDQLVRVNVYVPKDLSHHEKELLKELKKTAAFSPSGSNNDKEEKSFFEKARDIFS.

A J domain is found at 4–69; that stretch reads DYYEVLGVSR…DKRRRYDQFG (66 aa). A CR-type zinc finger spans residues 156-237; the sequence is GVEKTLKIKK…CYGEGIKQGD (82 aa). Zn(2+) contacts are provided by Cys169, Cys172, Cys185, Cys188, Cys211, Cys214, Cys225, and Cys228. 4 CXXCXGXG motif repeats span residues 169–176, 185–192, 211–218, and 225–232; these read CKECNGSG, CQTCHGSG, CPTCGGEG, and CTACYGEG. The interval 377 to 401 is disordered; that stretch reads AFSPSGSNNDKEEKSFFEKARDIFS. Residues 385-401 show a composition bias toward basic and acidic residues; it reads NDKEEKSFFEKARDIFS.

The protein belongs to the DnaJ family. As to quaternary structure, homodimer. Zn(2+) is required as a cofactor.

Its subcellular location is the cytoplasm. Participates actively in the response to hyperosmotic and heat shock by preventing the aggregation of stress-denatured proteins and by disaggregating proteins, also in an autonomous, DnaK-independent fashion. Unfolded proteins bind initially to DnaJ; upon interaction with the DnaJ-bound protein, DnaK hydrolyzes its bound ATP, resulting in the formation of a stable complex. GrpE releases ADP from DnaK; ATP binding to DnaK triggers the release of the substrate protein, thus completing the reaction cycle. Several rounds of ATP-dependent interactions between DnaJ, DnaK and GrpE are required for fully efficient folding. Also involved, together with DnaK and GrpE, in the DNA replication of plasmids through activation of initiation proteins. The polypeptide is Chaperone protein DnaJ (Chlorobium limicola (strain DSM 245 / NBRC 103803 / 6330)).